Consider the following 271-residue polypeptide: 4-hydroxy-tetrahydrodipicolinate reductase (271 aa).

NAD(+) contacts are provided by residues 10-15 (GAGGRM), glutamate 36, 100-102 (GTT), and 124-127 (SGNM). Residue histidine 157 is the Proton donor/acceptor of the active site. Residue histidine 158 coordinates (S)-2,3,4,5-tetrahydrodipicolinate. The active-site Proton donor is the lysine 161. Residue 167–168 (GT) coordinates (S)-2,3,4,5-tetrahydrodipicolinate.

This sequence belongs to the DapB family.

Its subcellular location is the cytoplasm. It catalyses the reaction (S)-2,3,4,5-tetrahydrodipicolinate + NAD(+) + H2O = (2S,4S)-4-hydroxy-2,3,4,5-tetrahydrodipicolinate + NADH + H(+). The catalysed reaction is (S)-2,3,4,5-tetrahydrodipicolinate + NADP(+) + H2O = (2S,4S)-4-hydroxy-2,3,4,5-tetrahydrodipicolinate + NADPH + H(+). It functions in the pathway amino-acid biosynthesis; L-lysine biosynthesis via DAP pathway; (S)-tetrahydrodipicolinate from L-aspartate: step 4/4. Its function is as follows. Catalyzes the conversion of 4-hydroxy-tetrahydrodipicolinate (HTPA) to tetrahydrodipicolinate. The chain is 4-hydroxy-tetrahydrodipicolinate reductase from Rhodopseudomonas palustris (strain HaA2).